The following is a 165-amino-acid chain: Nucleotide-binding protein Tfu_2672 (165 aa).

Belongs to the YajQ family.

Nucleotide-binding protein. The sequence is that of Nucleotide-binding protein Tfu_2672 from Thermobifida fusca (strain YX).